The sequence spans 86 residues: Diphthamide biosynthesis protein 3 (86 aa).

In terms of domain architecture, DPH-type MB spans 4-60; it reads YHDEVEIEDFEYDEEEEMYYYPCPCGDRFQISKEELIEGEEVATCPSCSLVIKVIYD. Residues Cys26, Cys28, Cys48, and Cys51 each contribute to the Fe cation site.

It belongs to the DPH3 family. Component of the 2-(3-amino-3-carboxypropyl)histidine synthase complex composed of Dph1, Dph2, Dph3 and a NADH-dependent reductase. Fe(2+) is required as a cofactor.

The catalysed reaction is [3Fe-4S](1+)-[protein] + Fe(2+)-[Dph3] = [3Fe-4S](0)-[protein] + Fe(3+)-[Dph3]. It catalyses the reaction 2 [3Fe-4S](0)-[protein] + 2 Fe(2+)-[Dph3] + NADH = 2 [4Fe-4S](1+)-[protein] + 2 [Dph3] + NAD(+) + H(+). It functions in the pathway protein modification; peptidyl-diphthamide biosynthesis. Required for the first step of diphthamide biosynthesis, a post-translational modification of histidine which occurs in elongation factor 2. Dph1 and Dph2 transfer a 3-amino-3-carboxypropyl (ACP) group from S-adenosyl-L-methionine (SAM) to a histidine residue, the reaction is assisted by a reduction system comprising Dph3 and a NADH-dependent reductase. Acts as an electron donor to reduce the Fe-S cluster in Dph1-Dph2 keeping the [4Fe-4S] clusters in the active and reduced state. Restores iron to Dph1-Dph2 iron-sulfur clusters which have degraded from [4Fe-4S] to [3Fe-4S] by donating an iron atom to reform [4Fe-4S] clusters, in a manner dependent on the presence of elongation factor 2 and SAM. Associates with the elongator complex and is required for tRNA Wobble base modifications mediated by the elongator complex. The elongator complex is required for multiple tRNA modifications, including mcm5U (5-methoxycarbonylmethyl uridine), mcm5s 2U (5-methoxycarbonylmethyl-2-thiouridine), and ncm5U (5-carbamoylmethyl uridine). This Drosophila melanogaster (Fruit fly) protein is Diphthamide biosynthesis protein 3.